We begin with the raw amino-acid sequence, 394 residues long: Argininosuccinate synthase (394 aa).

8–16 is a binding site for ATP; that stretch reads AYSGGLDTS. Positions 86 and 91 each coordinate L-citrulline. Residue G116 coordinates ATP. L-aspartate is bound by residues T118, N122, and D123. N122 is a binding site for L-citrulline. The L-citrulline site is built by R126, S172, S181, E257, and Y269.

This sequence belongs to the argininosuccinate synthase family. Type 1 subfamily. As to quaternary structure, homotetramer.

It is found in the cytoplasm. The catalysed reaction is L-citrulline + L-aspartate + ATP = 2-(N(omega)-L-arginino)succinate + AMP + diphosphate + H(+). The protein operates within amino-acid biosynthesis; L-arginine biosynthesis; L-arginine from L-ornithine and carbamoyl phosphate: step 2/3. This Methanosarcina acetivorans (strain ATCC 35395 / DSM 2834 / JCM 12185 / C2A) protein is Argininosuccinate synthase.